A 208-amino-acid polypeptide reads, in one-letter code: N-(5'-phosphoribosyl)anthranilate isomerase (208 aa).

This sequence belongs to the TrpF family.

The enzyme catalyses N-(5-phospho-beta-D-ribosyl)anthranilate = 1-(2-carboxyphenylamino)-1-deoxy-D-ribulose 5-phosphate. Its pathway is amino-acid biosynthesis; L-tryptophan biosynthesis; L-tryptophan from chorismate: step 3/5. The chain is N-(5'-phosphoribosyl)anthranilate isomerase from Methanococcus maripaludis (strain C5 / ATCC BAA-1333).